Reading from the N-terminus, the 74-residue chain is MCLLMLVLGAMYVQGWHSAGFGKRTLKKRCYPGQPGCGHCSRPNYCEGARCESGFHDCGSDHWCDASGDRCCCA.

The first 18 residues, 1–18 (MCLLMLVLGAMYVQGWHS), serve as a signal peptide directing secretion. Residues 19–27 (AGFGKRTLK) constitute a propeptide, removed in mature form. Disulfide bonds link cysteine 30–cysteine 37, cysteine 40–cysteine 71, cysteine 46–cysteine 64, cysteine 51–cysteine 72, and cysteine 58–cysteine 73.

It belongs to the Cnidaria small cysteine-rich protein (SCRiP) family. In terms of tissue distribution, detected in mucus secreted from ectoderm.

Its subcellular location is the secreted. In terms of biological role, potentiates activation of mammalian TRPA1, a non-selective cation channel involved in perception of pain, in vitro yet has an analgesic and anti-inflammatory effect in vivo. Has antibacterial activity against C.glutamicum (MIC=50 uM) and, to a lesser extent, against S.aureus but not against P.aeruginosa or E.coli. The protein is Tau-AnmTx Ueq 12-1 of Urticina eques (Sea anemone).